The sequence spans 159 residues: CASP-like protein 1C1 (159 aa).

The Cytoplasmic portion of the chain corresponds to 1 to 6 (MAKIKR). The helical transmembrane segment at 7 to 27 (IITTLVRLLVLGAALSATIVM) threads the bilayer. Residues 28–50 (VTSHDSAEVLNLSFDAKYTNARA) lie on the Extracellular side of the membrane. Asn-38 is a glycosylation site (N-linked (GlcNAc...) asparagine). A helical transmembrane segment spans residues 51-73 (FVYFAITNAIASGYSFIALFLSF). Residues 74-86 (STPLWHLVFLLDV) lie on the Cytoplasmic side of the membrane. The chain crosses the membrane as a helical span at residues 87–107 (FMTLLLTSSISVALAIADVGK). Residues 108–130 (KGNSHAGWLPVCGQVPEFCDHVT) lie on the Extracellular side of the membrane. The chain crosses the membrane as a helical span at residues 131–151 (GALIAGFSAAVLYLVLLLFSI). Residues 152 to 159 (HAVLNPKP) are Cytoplasmic-facing.

Belongs to the Casparian strip membrane proteins (CASP) family. In terms of assembly, homodimer and heterodimers.

It localises to the cell membrane. The sequence is that of CASP-like protein 1C1 from Vitis vinifera (Grape).